Consider the following 96-residue polypeptide: Putative septation protein SpoVG (96 aa).

The protein belongs to the SpoVG family.

In terms of biological role, essential for sporulation. Interferes with or is a negative regulator of the pathway leading to asymmetric septation. The protein is Putative septation protein SpoVG of Priestia megaterium (Bacillus megaterium).